Here is a 264-residue protein sequence, read N- to C-terminus: H-2 class II histocompatibility antigen, I-A beta chain (264 aa).

The signal sequence occupies residues 1 to 31 (MVWLPRVPCVAAVILLLTVLSPPVALVRDSR). The interval 32–121 (PWFLEYCKSE…IFDNFLVPRR (90 aa)) is beta-1. The Extracellular portion of the chain corresponds to 32–225 (PWFLEYCKSE…KAQSTSAQNK (194 aa)). Disulfide bonds link Cys42-Cys106 and Cys144-Cys200. A glycan (N-linked (GlcNAc...) asparagine) is linked at Asn46. The interval 122–215 (VEPTVTVYPT…SLTDPVTVEW (94 aa)) is beta-2. Residues 124–214 (PTVTVYPTKT…PSLTDPVTVE (91 aa)) form the Ig-like C1-type domain. The interval 216–225 (KAQSTSAQNK) is connecting peptide. The helical transmembrane segment at 226-248 (MLSGVGGFVLGLLFLRAGLFIYF) threads the bilayer. The Cytoplasmic portion of the chain corresponds to 249–264 (RNQKGQSGLQPTGLLS).

This sequence belongs to the MHC class II family. Ubiquitinated in immature dendritic cells leading to down-regulation of MHC class II.

It is found in the membrane. This is H-2 class II histocompatibility antigen, I-A beta chain (H2-Eb1) from Mus musculus (Mouse).